The sequence spans 129 residues: Transmembrane protein 105 (129 aa).

Transmembrane regions (helical) follow at residues 23 to 43 (AGNVIGQLIYLLTWSLFTAWL) and 94 to 114 (FLAGGLHLVPSSLSLAACGVV).

It is found in the membrane. This is Transmembrane protein 105 (TMEM105) from Homo sapiens (Human).